The sequence spans 508 residues: Maturase K (508 aa).

Belongs to the intron maturase 2 family. MatK subfamily.

It localises to the plastid. The protein resides in the chloroplast. Functionally, usually encoded in the trnK tRNA gene intron. Probably assists in splicing its own and other chloroplast group II introns. This chain is Maturase K, found in Ranunculus glacialis (Glacier buttercup).